Consider the following 3916-residue polypeptide: Fusarin C synthetase (3916 aa).

A Ketosynthase family 3 (KS3) domain is found at 9–440 (KEPIAIIGTS…GTNVHAIIEQ (432 aa)). Active-site for beta-ketoacyl synthase activity residues include Cys-182, His-319, and His-360. The segment at 548–866 (VFTGQGAQWP…QGTVARNIHD (319 aa)) is malonyl-CoA:ACP transacylase (MAT) domain. The segment at 935-1068 (HPLLGARSVE…GQLRVEFGCS (134 aa)) is N-terminal hotdog fold. Residues 935–1228 (HPLLGARSVE…GLTCTSLLRP (294 aa)) are dehydratase (DH) domain. Positions 935–1231 (HPLLGARSVE…CTSLLRPGPS (297 aa)) constitute a PKS/mFAS DH domain. The active-site Proton acceptor; for dehydratase activity is His-967. The tract at residues 1084–1231 (LTSVNMERFY…CTSLLRPGPS (148 aa)) is C-terminal hotdog fold. The active-site Proton donor; for dehydratase activity is the Asp-1141. Residues 1347–1575 (IQAVGENLPS…VNDFVDAEKY (229 aa)) form a C-methyltransferase (CMeT) domain region. The tract at residues 2092 to 2266 (TYLLIGCTGG…AASVMHIGMV (175 aa)) is ketoreductase (KR) domain 1. In terms of domain architecture, Carrier 1 spans 2372-2449 (EILAVVEEEF…ELCSTVVSHL (78 aa)). An O-(pantetheine 4'-phosphoryl)serine modification is found at Ser-2409. Residues 2487–2510 (NEPFTIRNSPNSTQVTSEAGVDED) form a disordered region. Residues 2492 to 2503 (IRNSPNSTQVTS) show a composition bias toward polar residues. The segment at 2522 to 2806 (PLSFAQERLW…VNLLPLRLKI (285 aa)) is condensation. Residues 2975–3385 (EFVVKQPDDT…RIAGDSQIKL (411 aa)) are adenylation. The Carrier 2 domain occupies 3493 to 3570 (KPLTETQERL…EMAAKIDGST (78 aa)). Ser-3530 is modified (O-(pantetheine 4'-phosphoryl)serine). A thiolester reductase (R) domain region spans residues 3612–3833 (LTGATGFLGV…DFVPVDVVAA (222 aa)).

It in the C-terminal section; belongs to the NRP synthetase family.

Its pathway is mycotoxin biosynthesis. Its function is as follows. Fusarin C synthetase; part of the gene cluster that mediates the biosynthesis of the mycotoxin fusarin C. Within the cluster, FUS1, FUS2, FUS8 and FUS9 are sufficient for fusarin production. The roles of the other FUS members are yet undetermined. The fusarin C synthetase FUS1 is responsible for the condensation of one acetyl-coenzyme A (CoA) unit with six malonyl-CoA units and the amide linkage of the arising heptaketide and homoserine, subsequently releasing the first intermediate, prefusarin, as an alcohol with an open ring structure. The cytochrome P450 monooxygenase FUS8 participates in multiple oxidation processes at carbon C-20 and is able to use the FUS1 product as substrate, resulting in formation of 20-hydroxy-prefusarin. This reaction seems to be essential before the 2-pyrrolidone ring closure can be catalyzed by FUS2, generating 20-hydroxy-fusarin. FUS8 is able to further oxidizes carbon C-20 after ring closure, resulting in the formation of carboxy-fusarin C. As the last step, FUS9 methylates the hydroxyl group at C-21 to generate fusarin C. Fusarin C can then rearrange to epi-fusarin C, the (z)-isomers, and fusarin A and fusarin D. This chain is Fusarin C synthetase, found in Gibberella fujikuroi (strain CBS 195.34 / IMI 58289 / NRRL A-6831) (Bakanae and foot rot disease fungus).